Here is a 1590-residue protein sequence, read N- to C-terminus: von Willebrand factor D and EGF domain-containing protein (1590 aa).

The first 20 residues, methionine 1–alanine 20, serve as a signal peptide directing secretion. N-linked (GlcNAc...) asparagine glycosylation is present at asparagine 367. One can recognise a VWFD domain in the interval alanine 423–methionine 606. Intrachain disulfides connect cysteine 425/cysteine 565 and cysteine 468/cysteine 477. 2 N-linked (GlcNAc...) asparagine glycosylation sites follow: asparagine 703 and asparagine 968. An EGF-like 1 domain is found at threonine 1177–glutamate 1216. 3 cysteine pairs are disulfide-bonded: cysteine 1181-cysteine 1189, cysteine 1183-cysteine 1204, and cysteine 1206-cysteine 1215. Over residues aspartate 1268 to alanine 1280 the composition is skewed to basic and acidic residues. The tract at residues aspartate 1268–lysine 1288 is disordered. 6 EGF-like domains span residues alanine 1294–glutamine 1326, aspartate 1358–glutamate 1390, serine 1422–glutamine 1454, asparagine 1455–glutamine 1486, asparagine 1518–glutamine 1550, and isoleucine 1551–glutamate 1582. Disulfide bonds link cysteine 1298-cysteine 1308, cysteine 1302-cysteine 1314, cysteine 1316-cysteine 1325, cysteine 1362-cysteine 1372, cysteine 1366-cysteine 1378, cysteine 1380-cysteine 1389, cysteine 1426-cysteine 1436, cysteine 1430-cysteine 1442, cysteine 1444-cysteine 1453, cysteine 1458-cysteine 1468, cysteine 1462-cysteine 1474, cysteine 1522-cysteine 1532, cysteine 1526-cysteine 1538, cysteine 1540-cysteine 1549, cysteine 1554-cysteine 1564, cysteine 1558-cysteine 1570, and cysteine 1572-cysteine 1581.

It localises to the secreted. In Homo sapiens (Human), this protein is von Willebrand factor D and EGF domain-containing protein (VWDE).